Here is a 141-residue protein sequence, read N- to C-terminus: Large ribosomal subunit protein uL11 (141 aa).

It belongs to the universal ribosomal protein uL11 family. Part of the ribosomal stalk of the 50S ribosomal subunit. Interacts with L10 and the large rRNA to form the base of the stalk. L10 forms an elongated spine to which L12 dimers bind in a sequential fashion forming a multimeric L10(L12)X complex. Post-translationally, one or more lysine residues are methylated.

Forms part of the ribosomal stalk which helps the ribosome interact with GTP-bound translation factors. This chain is Large ribosomal subunit protein uL11, found in Prochlorococcus marinus (strain MIT 9211).